A 404-amino-acid polypeptide reads, in one-letter code: Cysteine desulfurase IscS (404 aa).

Residues 75 to 76, asparagine 155, glutamine 183, and 203 to 205 each bind pyridoxal 5'-phosphate; these read AT and SAH. Position 206 is an N6-(pyridoxal phosphate)lysine (lysine 206). Threonine 243 contacts pyridoxal 5'-phosphate. Residue cysteine 328 is the Cysteine persulfide intermediate of the active site. Position 328 (cysteine 328) interacts with [2Fe-2S] cluster.

This sequence belongs to the class-V pyridoxal-phosphate-dependent aminotransferase family. NifS/IscS subfamily. In terms of assembly, homodimer. Forms a heterotetramer with IscU, interacts with other sulfur acceptors. The cofactor is pyridoxal 5'-phosphate.

The protein resides in the cytoplasm. It catalyses the reaction (sulfur carrier)-H + L-cysteine = (sulfur carrier)-SH + L-alanine. Its pathway is cofactor biosynthesis; iron-sulfur cluster biosynthesis. Its function is as follows. Master enzyme that delivers sulfur to a number of partners involved in Fe-S cluster assembly, tRNA modification or cofactor biosynthesis. Catalyzes the removal of elemental sulfur atoms from cysteine to produce alanine. Functions as a sulfur delivery protein for Fe-S cluster synthesis onto IscU, an Fe-S scaffold assembly protein, as well as other S acceptor proteins. The polypeptide is Cysteine desulfurase IscS (Pseudomonas putida (strain W619)).